The primary structure comprises 794 residues: Ent-kaurene synthase 1, chloroplastic (794 aa).

Residues 1 to 28 (MSLLLSNSVLVGPKFRSSRISHASASLD) constitute a chloroplast transit peptide. Positions 543, 547, 687, and 695 each coordinate Mg(2+). The DDXXD motif motif lies at 543 to 547 (DDFFD).

Belongs to the terpene synthase family. The cofactor is Mg(2+). Accumulates in leaves, and, at low levels, in germinating seeds.

It localises to the plastid. The protein resides in the chloroplast. It carries out the reaction ent-copalyl diphosphate = ent-kaur-16-ene + diphosphate. It functions in the pathway secondary metabolite biosynthesis; terpenoid biosynthesis. Its pathway is plant hormone biosynthesis; gibberellin biosynthesis. Its function is as follows. Involved in the biosynthesis of ent-kaurene diterpenoids natural products such as oridonin, miltiradiene, eriocalyxin B and nezukol, known to exhibit antitumor, anti-inflammatory and antibacterial activities, and in the production of gibberellins phytohormones. Catalyzes the conversion of ent-copalyl diphosphate (ent-CPP) to ent-kaurene. This chain is Ent-kaurene synthase 1, chloroplastic, found in Isodon eriocalyx (Plectranthus eriocalyx).